A 334-amino-acid chain; its full sequence is Meso-diaminopimelate D-dehydrogenase (334 aa).

NADP(+) contacts are provided by residues Y16 to L19, T40 to R42, C75 to S78, G98 to D100, and C127 to P131. Substrate is bound by residues D100, D130, W154, Q160–G161, T179, R205, H255, and N284.

Belongs to the diaminopimelate dehydrogenase family. As to quaternary structure, homodimer.

It catalyses the reaction meso-2,6-diaminopimelate + NADP(+) + H2O = (S)-2-amino-6-oxoheptanedioate + NH4(+) + NADPH + H(+). Its pathway is amino-acid biosynthesis; L-lysine biosynthesis via DAP pathway; DL-2,6-diaminopimelate from (S)-tetrahydrodipicolinate: step 1/1. Catalyzes the reversible NADPH-dependent reductive amination of L-2-amino-6-oxopimelate, the acyclic form of L-tetrahydrodipicolinate, to generate the meso compound, D,L-2,6-diaminopimelate. Probably plays a role in lysine biosynthesis. Exhibits a high substrate specificity for meso-2,6-diaminopimelate (m-DAP), since the activity with L,L-2,6-diaminopimelate is less than 5% of the activity observed with m-DAP. Can use NAD(+) only very poorly since the activity observed in the presence of NAD(+) is about 0.3% of that with NADP(+). This is Meso-diaminopimelate D-dehydrogenase (ddh) from Acetivibrio thermocellus (strain ATCC 27405 / DSM 1237 / JCM 9322 / NBRC 103400 / NCIMB 10682 / NRRL B-4536 / VPI 7372) (Clostridium thermocellum).